Here is a 122-residue protein sequence, read N- to C-terminus: Large ribosomal subunit protein uL14c (122 aa).

The protein belongs to the universal ribosomal protein uL14 family. Part of the 50S ribosomal subunit.

It localises to the plastid. Binds to 23S rRNA. The polypeptide is Large ribosomal subunit protein uL14c (Cuscuta reflexa (Southern Asian dodder)).